The primary structure comprises 353 residues: UPF0283 membrane protein YPTS_2342 (353 aa).

3 consecutive transmembrane segments (helical) span residues 71–91 (MVTA…VQWV), 101–121 (IALG…GSVV), and 214–234 (ESAL…FIAW).

This sequence belongs to the UPF0283 family.

The protein resides in the cell inner membrane. This chain is UPF0283 membrane protein YPTS_2342, found in Yersinia pseudotuberculosis serotype IB (strain PB1/+).